We begin with the raw amino-acid sequence, 512 residues long: FACT complex subunit pob3 (512 aa).

Residues leucine 460 to glycine 504 show a composition bias toward acidic residues. Residues leucine 460–glutamate 512 are disordered.

The protein belongs to the SSRP1 family. Forms a stable heterodimer with spt16. The spt16-pob3 dimer weakly associates with multiple molecules of nhp6 to form the FACT complex. Interacts with abo1.

It is found in the nucleus. The protein localises to the chromosome. Functionally, component of the FACT complex, a general chromatin factor that acts to reorganize nucleosomes. The FACT complex is involved in multiple processes that require DNA as a template such as mRNA elongation, DNA replication and DNA repair. During transcription elongation the FACT complex acts as a histone chaperone that both destabilizes and restores nucleosomal structure. It facilitates the passage of RNA polymerase II and transcription by promoting the dissociation of one histone H2A-H2B dimer from the nucleosome, then subsequently promotes the reestablishment of the nucleosome following the passage of RNA polymerase II. This chain is FACT complex subunit pob3, found in Schizosaccharomyces pombe (strain 972 / ATCC 24843) (Fission yeast).